A 287-amino-acid chain; its full sequence is MHYKKAFLASLLSSIALTAYAPPEPWATLTPSSKMDGGTTEYRTSFGLAVIPFTVTESKVKRNVISQINDGQVQVTTQKLPHPVSQIGDGQIQVTTQKVPPVVSHIVSQIGDGQLQITTAKNVVTKSTIAVPSKTVTATATSTATAVSQIHDGQVQVTISSASSSSVLSKSKLEPTKKPNNEKVIKVQACKSSGTLAITLQEGVLIDSSGRIGSIVANRQFQFDGPPPQAGAIYAGGWSITKHGTLAIGDNDVFYQCLSGTFYNLYDQSIGGQCNPVHLQTVGLVDC.

The first 21 residues, 1-21 (MHYKKAFLASLLSSIALTAYA), serve as a signal peptide directing secretion. A propeptide spanning residues 22–62 (PPEPWATLTPSSKMDGGTTEYRTSFGLAVIPFTVTESKVKR) is cleaved from the precursor. PIR1/2/3 repeat units follow at residues 62-80 (RNVI…TQKL), 81-99 (PHPV…TQKV), 104-122 (SHIV…TAKN), and 144-162 (ATAV…ISSA).

Belongs to the PIR protein family. Post-translationally, covalently linked to beta-1,3-glucan of the inner cell wall layer via an alkali-sensitive ester linkage between the gamma-carboxyl group of glutamic acids, arising from specific glutamines within the PIR1/2/3 repeats, and hydroxyl groups of glucoses of beta-1,3-glucan chains.

The protein localises to the secreted. The protein resides in the cell wall. Its function is as follows. Component of the outer cell wall layer. May be involved in meiosis and sporulation. This Saccharomyces cerevisiae (strain YJM789) (Baker's yeast) protein is Cell wall protein PIR5 (PIR5).